Reading from the N-terminus, the 523-residue chain is Transcription factor MYB120 (523 aa).

2 HTH myb-type domains span residues 23–75 (GVIL…ANHL) and 76–130 (RPNL…KRLL). 2 consecutive DNA-binding regions (H-T-H motif) follow at residues 51–75 (WNAV…ANHL) and 103–126 (WARM…NTRL). Disordered stretches follow at residues 140–254 (DIIP…YPTL), 332–373 (QTAT…SHYT), 396–426 (QIPQ…GAHR), and 444–470 (LASG…NNTN). The span at 147-167 (LHPHPHHQQQQQHNHHHHHHQ) shows a compositional bias: basic residues. The segment covering 175 to 185 (MYFQPQSSQRN) has biased composition (polar residues). Low complexity-rich tracts occupy residues 202 to 212 (SSSSFTFHTTT), 223 to 232 (TPNTPSQLSS), and 341 to 368 (NPYS…PSFL). Residues 396 to 410 (QIPQIDGFNNVNNFT) show a composition bias toward polar residues.

Expressed in pollen grains and pollen tube. Mostly expressed in mature pollen grains, and, to a lower extent, in inflorescences and siliques.

The protein localises to the nucleus. Transcription activator. Binds to 5'-CAACTGTC-3' and/or 5'-TAACAAA-3' motif in target gene promoter to promote their expression. Together with MYB97 and MYB101, functions as a male factor that controls pollen tube-synergid interaction in fertilization. Required for pollen tube growth arrest and sperm cell release in the female gametophyte, probably via the regulation of pollen tube-specific gene expression. This is Transcription factor MYB120 from Arabidopsis thaliana (Mouse-ear cress).